We begin with the raw amino-acid sequence, 195 residues long: Thioredoxin reductase-like selenoprotein T (195 aa).

A signal peptide spans 1–19 (MRLLLLLLVAASAVVRSEA). Positions 46–49 (CVSU) form a cross-link, cysteinyl-selenocysteine (Cys-Sec). A non-standard amino acid (selenocysteine) is located at residue Sec49. Residues 85–103 (IASFLSVFKLVLIGLIIVG) form a helical membrane-spanning segment.

This sequence belongs to the SelWTH family. Selenoprotein T subfamily. May contain a selenide-sulfide bond between Cys-46 and Sec-49. This bond is speculated to serve as redox-active pair. As to expression, ubiquitous. Highly expressed in the endocrine pancreas. Expressed at low levels in the adult brain.

It is found in the endoplasmic reticulum membrane. The enzyme catalyses [thioredoxin]-dithiol + NADP(+) = [thioredoxin]-disulfide + NADPH + H(+). In terms of biological role, selenoprotein with thioredoxin reductase-like oxidoreductase activity. Protects dopaminergic neurons against oxidative stress and cell death. Involved in ADCYAP1/PACAP-induced calcium mobilization and neuroendocrine secretion. Plays a role in fibroblast anchorage and redox regulation. In gastric smooth muscle, modulates the contraction processes through the regulation of calcium release and MYLK activation. In pancreatic islets, involved in the control of glucose homeostasis, contributes to prolonged ADCYAP1/PACAP-induced insulin secretion. The polypeptide is Thioredoxin reductase-like selenoprotein T (Mus musculus (Mouse)).